A 274-amino-acid chain; its full sequence is Diaminopimelate epimerase (274 aa).

3 residues coordinate substrate: Asn-11, Gln-44, and Asn-64. The active-site Proton donor is the Cys-73. Substrate contacts are provided by residues 74–75 (GN), Asn-157, Asn-190, and 208–209 (ER). Catalysis depends on Cys-217, which acts as the Proton acceptor. 218–219 (GS) contributes to the substrate binding site.

Belongs to the diaminopimelate epimerase family. Homodimer.

The protein resides in the cytoplasm. The enzyme catalyses (2S,6S)-2,6-diaminopimelate = meso-2,6-diaminopimelate. It functions in the pathway amino-acid biosynthesis; L-lysine biosynthesis via DAP pathway; DL-2,6-diaminopimelate from LL-2,6-diaminopimelate: step 1/1. In terms of biological role, catalyzes the stereoinversion of LL-2,6-diaminopimelate (L,L-DAP) to meso-diaminopimelate (meso-DAP), a precursor of L-lysine and an essential component of the bacterial peptidoglycan. The polypeptide is Diaminopimelate epimerase (Yersinia pseudotuberculosis serotype O:1b (strain IP 31758)).